An 89-amino-acid polypeptide reads, in one-letter code: Small ribosomal subunit protein uS15 (89 aa).

This sequence belongs to the universal ribosomal protein uS15 family. As to quaternary structure, part of the 30S ribosomal subunit. Forms a bridge to the 50S subunit in the 70S ribosome, contacting the 23S rRNA.

In terms of biological role, one of the primary rRNA binding proteins, it binds directly to 16S rRNA where it helps nucleate assembly of the platform of the 30S subunit by binding and bridging several RNA helices of the 16S rRNA. Forms an intersubunit bridge (bridge B4) with the 23S rRNA of the 50S subunit in the ribosome. The chain is Small ribosomal subunit protein uS15 from Prochlorococcus marinus (strain MIT 9312).